Reading from the N-terminus, the 142-residue chain is Group IIE secretory phospholipase A2 (142 aa).

A signal peptide spans 1–19 (MKPPIALACLCLLVPLAGG). Ca(2+) contacts are provided by D41, G43, Y45, G47, and G49. Cystine bridges form between C44/C135, C46/C62, C61/C115, C67/C142, C68/C108, C77/C101, and C95/C106. H65 is a catalytic residue. D66 contributes to the Ca(2+) binding site. Residue D109 is part of the active site. Ca(2+)-binding residues include Y130 and N132.

The protein belongs to the phospholipase A2 family. The cofactor is Ca(2+). Highly expressed in skin and uterus, and at lower levels in various other tissues. Expressed in hair follicles, specifically localized in companion cells of the outer root sheath and cuticular cells of the inner root sheath in hair follicles during anagen. Expressed in white and brown adipose tissue.

It localises to the secreted. It is found in the cytoplasm. It carries out the reaction a 1,2-diacyl-sn-glycero-3-phosphoethanolamine + H2O = a 1-acyl-sn-glycero-3-phosphoethanolamine + a fatty acid + H(+). It catalyses the reaction 1-hexadecanoyl-2-(9Z-octadecenoyl)-sn-glycero-3-phosphoethanolamine + H2O = 1-hexadecanoyl-sn-glycero-3-phosphoethanolamine + (9Z)-octadecenoate + H(+). The catalysed reaction is 1-hexadecanoyl-2-(9Z,12Z-octadecadienoyl)-sn-glycero-3-phosphoethanolamine + H2O = 1-hexadecanoyl-sn-glycero-3-phosphoethanolamine + (9Z,12Z)-octadecadienoate + H(+). The enzyme catalyses 1-hexadecanoyl-2-(5Z,8Z,11Z,14Z-eicosatetraenoyl)-sn-glycero-3-phosphoethanolamine + H2O = 1-hexadecanoyl-sn-glycero-3-phosphoethanolamine + (5Z,8Z,11Z,14Z)-eicosatetraenoate + H(+). It carries out the reaction 1,2-dihexadecanoyl-sn-glycero-3-phospho-(1'-sn-glycerol) + H2O = 1-hexadecanoyl-sn-glycero-3-phospho-(1'-sn-glycerol) + hexadecanoate + H(+). It catalyses the reaction 1-hexadecanoyl-2-(9Z-octadecenoyl)-sn-glycero-3-phosphoglycerol + H2O = 1-hexadecanoyl-sn-glycero-3-phosphoglycerol + (9Z)-octadecenoate + H(+). The catalysed reaction is a 1,2-diacyl-sn-glycero-3-phosphocholine + H2O = a 1-acyl-sn-glycero-3-phosphocholine + a fatty acid + H(+). The enzyme catalyses 1,2-dihexadecanoyl-sn-glycero-3-phosphocholine + H2O = 1-hexadecanoyl-sn-glycero-3-phosphocholine + hexadecanoate + H(+). It carries out the reaction 1-hexadecanoyl-2-(9Z-octadecenoyl)-sn-glycero-3-phosphocholine + H2O = 1-hexadecanoyl-sn-glycero-3-phosphocholine + (9Z)-octadecenoate + H(+). It catalyses the reaction 1-hexadecanoyl-2-(9Z,12Z-octadecadienoyl)-sn-glycero-3-phosphocholine + H2O = (9Z,12Z)-octadecadienoate + 1-hexadecanoyl-sn-glycero-3-phosphocholine + H(+). The catalysed reaction is 1-hexadecanoyl-2-(4Z,7Z,10Z,13Z,16Z,19Z-docosahexaenoyl)-sn-glycero-3-phosphocholine + H2O = (4Z,7Z,10Z,13Z,16Z,19Z)-docosahexaenoate + 1-hexadecanoyl-sn-glycero-3-phosphocholine + H(+). In terms of biological role, secretory calcium-dependent phospholipase A2 that primarily targets extracellular phospholipids. Hydrolyzes the ester bond of the fatty acyl group attached at sn-2 position of phospholipids (phospholipase A2 activity), releasing various unsaturated fatty acids including oleoate, linoleoate, arachidonate, docosahexaenoate and lysophosphatidylethanolamines in preference to lysophosphatidylcholines. In response to high-fat diet, hydrolyzes minor lipoprotein phospholipids including phosphatidylserines, phosphatidylinositols and phosphatidylglycerols, altering lipoprotein composition and fat storage in adipose tissue and liver. May act in an autocrine and paracrine manner. Contributes to lipid remodeling of cellular membranes and generation of lipid mediators involved in pathogen clearance. Cleaves sn-2 fatty acyl chains of phosphatidylglycerols and phosphatidylethanolamines, which are major components of membrane phospholipids in bacteria. Acts as a hair follicle phospholipase A2. Selectively releases lysophosphatidylethanolamines (LPE) and various unsaturated fatty acids in skin to regulate hair follicle homeostasis. May regulate the inflammatory response by releasing arachidonate, a precursor of prostaglandins and leukotrienes. Upon allergen exposure, may participate in allergic inflammatory response by enhancing leukotriene C4 synthesis and degranulation in mast cells. The chain is Group IIE secretory phospholipase A2 (Pla2g2e) from Mus musculus (Mouse).